The primary structure comprises 61 residues: MDPNCSCPTSGSCSCAGSCTCKACRCPSCKKSCCSCCPVGCAKCAQGCVCKGASDKCSCCA.

The segment at methionine 1–cysteine 29 is beta. Positions 5, 7, 13, 15, 19, 21, 24, 26, 29, 33, 34, 36, 37, 41, 44, 48, 50, 57, 59, and 60 each coordinate a divalent metal cation. The alpha stretch occupies residues lysine 30 to alanine 61.

It belongs to the metallothionein superfamily. Type 1 family.

Functionally, metallothioneins have a high content of cysteine residues that bind various heavy metals; these proteins are transcriptionally regulated by both heavy metals and glucocorticoids. The protein is Metallothionein-1B (MT1B) of Ovis aries (Sheep).